Reading from the N-terminus, the 133-residue chain is Nucleoid-associated protein Mb3743c (133 aa).

The interval 98-133 is disordered; sequence GAMRPPAPPAAPPGAPGMPGMPGMPGAPGAPPVPGI. Pro residues predominate over residues 102–113; sequence PPAPPAAPPGAP.

The protein belongs to the YbaB/EbfC family. Homodimer.

It is found in the cytoplasm. It localises to the nucleoid. Functionally, binds to DNA and alters its conformation. May be involved in regulation of gene expression, nucleoid organization and DNA protection. This chain is Nucleoid-associated protein Mb3743c, found in Mycobacterium bovis (strain ATCC BAA-935 / AF2122/97).